A 197-amino-acid chain; its full sequence is Adenylate kinase isoenzyme 6 homolog FAP7 (197 aa).

5 residues coordinate ATP: Gly-17, Gly-19, Lys-20, Ser-21, and Ser-22. The NMPbind stretch occupies residues 38 to 61 (NISDFAKDNDCFEGYDEGRKSHIV). Positions 113 to 123 (ARGYHDSKIEE) are LID. Residue Arg-114 coordinates ATP. The tract at residues 176–197 (PDGVTNEYQGPRSDDEDDEDSE) is disordered. Tyr-183 carries the post-translational modification Phosphotyrosine. Ser-188 and Ser-196 each carry phosphoserine.

This sequence belongs to the adenylate kinase family. AK6 subfamily. In terms of assembly, interacts with small ribosomal subunit protein uS11B/RPS14B. Not a structural component of 43S pre-ribosomes, but transiently interacts with them by binding to uS11/RPS14.

The protein resides in the cytoplasm. The protein localises to the nucleus. It catalyses the reaction AMP + ATP = 2 ADP. The catalysed reaction is ATP + H2O = ADP + phosphate + H(+). In terms of biological role, broad-specificity nucleoside monophosphate (NMP) kinase that catalyzes the reversible transfer of the terminal phosphate group between nucleoside triphosphates and monophosphates. Also has ATPase activity. Involved in the late cytoplasmic maturation steps of the 40S ribosomal particles, specifically 18S rRNA maturation. Required for cleavage of the 20S pre-rRNA at site D in the cytoplasm. While NMP activity is not required for ribosome maturation, ATPase activity is. Associates transiently with small ribosomal subunit protein uS11. ATP hydrolysis breaks the interaction with uS11. May temporarily remove uS11 from the ribosome to enable a conformational change of the ribosomal RNA that is needed for the final maturation step of the small ribosomal subunit. Promotes formation of the rotated state in 80S-like ribosomes, a key intermediate in translocation, thereby releasing the essential assembly factor DIM1 from pre-40S subunits. Its NMP activity may have a role in nuclear energy homeostasis. Involved in oxidative stress response. Required for POS9-dependent target gene transcription upon oxidative stress. In Saccharomyces cerevisiae (strain ATCC 204508 / S288c) (Baker's yeast), this protein is Adenylate kinase isoenzyme 6 homolog FAP7.